We begin with the raw amino-acid sequence, 739 residues long: Lysyl oxidase homolog 3A (739 aa).

Residues 1 to 25 (MLRSELRDMVVAMVLWGILLPFCLS) form the signal peptide. 4 SRCR domains span residues 38-139 (FRLA…VICK), 166-272 (LRPL…VSCV), 293-393 (MRLK…VICN), and 403-511 (MRLT…VICS). 12 disulfides stabilise this stretch: C64-C128, C77-C138, C108-C118, C196-C261, C209-C271, C238-C248, C318-C382, C331-C392, C362-C372, C433-C497, C446-C510, and C479-C489. Residue N256 is glycosylated (N-linked (GlcNAc...) asparagine). N468 is a glycosylation site (N-linked (GlcNAc...) asparagine). N-linked (GlcNAc...) asparagine glycosylation occurs at N611. Positions 620 to 656 (KASFCLEDTECHEGVSKRYECANFGEQGITVGCWDLY) form a cross-link, lysine tyrosylquinone (Lys-Tyr). A 2',4',5'-topaquinone modification is found at Y656.

It belongs to the lysyl oxidase family. Cu cation serves as cofactor. Lysine tyrosylquinone residue is required as a cofactor. In terms of processing, the lysine tyrosylquinone cross-link (LTQ) is generated by condensation of the epsilon-amino group of a lysine with a topaquinone produced by oxidation of tyrosine.

It localises to the secreted. The protein resides in the extracellular space. The protein localises to the cytoplasm. It is found in the nucleus. The enzyme catalyses L-lysyl-[protein] + O2 + H2O = (S)-2-amino-6-oxohexanoyl-[protein] + H2O2 + NH4(+). The catalysed reaction is N(6)-acetyl-L-lysyl-[protein] + O2 + H2O = acetamide + (S)-2-amino-6-oxohexanoyl-[protein] + H2O2. Functionally, protein-lysine 6-oxidase that mediates the oxidation of peptidyl lysine residues to allysine in target proteins. Catalyzes the post-translational oxidative deamination of peptidyl lysine residues in precursors of elastin and different types of collagens, a prerequisite in the formation of cross-links between collagens and elastin. Can mediate oxidation of lysine residues that are acetylated. Also able to catalyze deacetylation of lysine residues. The chain is Lysyl oxidase homolog 3A from Danio rerio (Zebrafish).